Reading from the N-terminus, the 231-residue chain is Cuticlin 2 (231 aa).

An N-terminal signal peptide occupies residues 1 to 16 (MQKLIVFFTTIAAAQA). 12 tandem repeats follow at residues 75–78 (AAPI), 79–82 (AAPA), 90–93 (AAPV), 105–108 (AAPI), 114–117 (AAPA), 121–124 (AAPV), 137–140 (AAPA), 153–156 (AAPA), 169–172 (AAPA), 192–195 (AAPA), 208–211 (AAPA), and 218–221 (AAPA). The interval 75–221 (AAPIAAPAGG…AGGYQAAAPA (147 aa)) is 12 X 4 AA repeats of A-A-P-[AVI].

In terms of processing, tyrosine residues can be cross-linked in vitro, leading to the formation of insoluble high molecular-weight complexes.

Its subcellular location is the secreted. Functionally, component of the insoluble part of the cuticles. The sequence is that of Cuticlin 2 from Caenorhabditis elegans.